Here is a 256-residue protein sequence, read N- to C-terminus: Alcohol dehydrogenase (256 aa).

12–35 is a binding site for NAD(+); sequence FVAGLGGIGLDTSKELVKRDLKNL. A substrate-binding site is contributed by S140. Residue Y153 is the Proton acceptor of the active site.

It belongs to the short-chain dehydrogenases/reductases (SDR) family. Homodimer.

The catalysed reaction is a primary alcohol + NAD(+) = an aldehyde + NADH + H(+). It catalyses the reaction a secondary alcohol + NAD(+) = a ketone + NADH + H(+). In Drosophila teissieri (Fruit fly), this protein is Alcohol dehydrogenase (Adh).